The primary structure comprises 858 residues: Leucine--tRNA ligase (858 aa).

The 'HIGH' region signature appears at 42–52 (PYPSGRLHMGH). Residues 618-622 (KMSKS) carry the 'KMSKS' region motif. An ATP-binding site is contributed by Lys621.

This sequence belongs to the class-I aminoacyl-tRNA synthetase family.

It is found in the cytoplasm. The catalysed reaction is tRNA(Leu) + L-leucine + ATP = L-leucyl-tRNA(Leu) + AMP + diphosphate. The polypeptide is Leucine--tRNA ligase (Aliivibrio salmonicida (strain LFI1238) (Vibrio salmonicida (strain LFI1238))).